We begin with the raw amino-acid sequence, 90 residues long: Protein S100-A6 (90 aa).

EF-hand domains are found at residues 12-47 (LIGI…IGSK) and 48-83 (LQDA…LAMI). Ca(2+) contacts are provided by Thr-28 and Glu-33. Lys-40 carries the post-translational modification N6-acetyllysine. The residue at position 46 (Ser-46) is a Phosphoserine. Position 47 is an N6-acetyllysine; alternate (Lys-47). Lys-47 is modified (N6-succinyllysine; alternate). Residues Asp-61, Asn-63, Asp-65, Glu-67, and Glu-72 each coordinate Ca(2+).

It belongs to the S-100 family. As to quaternary structure, homodimer; head to tail assembly of 2 subunits. Interacts with CACYBP in a calcium-dependent manner. Interacts with ANXA2 and ANXA11 (via N-terminus). Interacts with SUGT1. Interacts with TP53; has higher affinity for TP53 that is phosphorylated on its N-terminal domain, and lower affinity for TP53 that is phosphorylated on its C-terminal domain. Interacts with tropomyosin. Interacts with FKBP4. Interacts with PPP5C (via TPR repeats); the interaction is calcium-dependent and modulates PPP5C activity. Interacts with TPPP; this interaction inhibits TPPP dimerization.

It is found in the nucleus envelope. The protein localises to the cytoplasm. Its subcellular location is the cell membrane. Functionally, may function as calcium sensor and modulator, contributing to cellular calcium signaling. May function by interacting with other proteins, such as TPR-containing proteins, and indirectly play a role in many physiological processes such as the reorganization of the actin cytoskeleton and in cell motility. Binds 2 calcium ions. Calcium binding is cooperative. This chain is Protein S100-A6 (S100A6), found in Oryctolagus cuniculus (Rabbit).